We begin with the raw amino-acid sequence, 343 residues long: Cytoplasmic tRNA 2-thiolation protein 1 (343 aa).

It belongs to the TtcA family. CTU1/NCS6/ATPBD3 subfamily.

It localises to the cytoplasm. Its pathway is tRNA modification; 5-methoxycarbonylmethyl-2-thiouridine-tRNA biosynthesis. In terms of biological role, plays a central role in 2-thiolation of mcm(5)S(2)U at tRNA wobble positions of tRNA(Lys), tRNA(Glu) and tRNA(Gln). Directly binds tRNAs and probably acts by catalyzing adenylation of tRNAs, an intermediate required for 2-thiolation. It is unclear whether it acts as a sulfurtransferase that transfers sulfur from thiocarboxylated URM1 onto the uridine of tRNAs at wobble position. The protein is Cytoplasmic tRNA 2-thiolation protein 1 of Drosophila mojavensis (Fruit fly).